A 299-amino-acid chain; its full sequence is MTLSVLSRKDKERVIRRLLLQAPPGEFVNAFDDLCLLIRDEKLMHHQGECAGHQHCQKYSVPLCIDGNPVLLSHHNVMGDYRFFDHQSKLSFKYDLLQNQLKDIQSHGIIQNEAEYLRVVLLCALKLYVNDHYPKGNCNMLRKTVKSKEYLIACIEDHNYETGECWNGLWKSKWIFQVNPFLTQVTGRIFVQAHFFRCVNLHIEISKDLKESLEIVNQAQLALSFARLVEEQENKFQAAVLEELQELSNEALRKILRRDLPVTRTLIDWHRILSDLNLVMYPKLGYVIYSRSVLCNWII.

Position 290 is a phosphoserine (Ser-290).

The protein belongs to the F-actin-capping protein alpha subunit family. Component of the F-actin capping complex, composed of a heterodimer of an alpha and a beta subunit. Component of the WASH complex, composed of F-actin-capping protein subunit alpha (CAPZA1, CAPZA2 or CAPZA3), F-actin-capping protein subunit beta (CAPZB), WASH (WASHC1, WASH2P, WASH3P, WASH4P, WASH5P or WASH6P), WASHC2 (WASHC2A or WASHC2C), WASHC3, WASHC4 and WASHC5. Expressed exclusively in testis and sperm. Highest expression is found in the neck region of ejaculated sperm with lower levels found in the tail and postacrosome region.

It localises to the cytoplasm. It is found in the cytoskeleton. F-actin-capping proteins bind in a Ca(2+)-independent manner to the fast growing ends of actin filaments (barbed end) thereby blocking the exchange of subunits at these ends. Unlike other capping proteins (such as gelsolin and severin), these proteins do not sever actin filaments. May play a role in the morphogenesis of spermatid. The polypeptide is F-actin-capping protein subunit alpha-3 (CAPZA3) (Homo sapiens (Human)).